The sequence spans 610 residues: Phosphoenolpyruvate carboxykinase [GTP] (610 aa).

Substrate contacts are provided by residues Arg-82 and 221-223 (YGG). Residues Lys-230 and His-250 each contribute to the Mn(2+) site. Residue Ser-272 coordinates substrate. Residue 273-278 (ACGKTN) coordinates GTP. The active site involves Cys-274. Asp-297 contributes to the Mn(2+) binding site. Position 387 to 389 (387 to 389 (NSR)) interacts with substrate. GTP is bound by residues Arg-389, Arg-420, and 515-518 (FGDN).

This sequence belongs to the phosphoenolpyruvate carboxykinase [GTP] family. In terms of assembly, monomer. The cofactor is Mn(2+).

Its subcellular location is the cytoplasm. It carries out the reaction oxaloacetate + GTP = phosphoenolpyruvate + GDP + CO2. The protein operates within carbohydrate biosynthesis; gluconeogenesis. In terms of biological role, involved in the gluconeogenesis. Catalyzes the conversion of oxaloacetate (OAA) to phosphoenolpyruvate (PEP), the rate-limiting step in the metabolic pathway that produces glucose from lactate and other precursors derived from the citric acid cycle. The polypeptide is Phosphoenolpyruvate carboxykinase [GTP] (Corynebacterium glutamicum (strain ATCC 13032 / DSM 20300 / JCM 1318 / BCRC 11384 / CCUG 27702 / LMG 3730 / NBRC 12168 / NCIMB 10025 / NRRL B-2784 / 534)).